A 122-amino-acid polypeptide reads, in one-letter code: Large ribosomal subunit protein uL14 (122 aa).

The protein belongs to the universal ribosomal protein uL14 family. Part of the 50S ribosomal subunit. Forms a cluster with proteins L3 and L19. In the 70S ribosome, L14 and L19 interact and together make contacts with the 16S rRNA in bridges B5 and B8.

In terms of biological role, binds to 23S rRNA. Forms part of two intersubunit bridges in the 70S ribosome. This chain is Large ribosomal subunit protein uL14, found in Novosphingobium aromaticivorans (strain ATCC 700278 / DSM 12444 / CCUG 56034 / CIP 105152 / NBRC 16084 / F199).